A 1111-amino-acid polypeptide reads, in one-letter code: Zinc finger protein GLI1 (1111 aa).

The segment at Gly-52–Val-78 is disordered. The interaction with SUFU stretch occupies residues Ser-123–Leu-127. C2H2-type zinc fingers lie at residues Thr-238–His-263, Phe-271–His-298, His-304–His-328, Tyr-334–His-359, and Tyr-365–His-390. The interaction with DNA stretch occupies residues Lys-286–His-294. 2 interaction with DNA regions span residues Ala-348–Lys-353 and Asp-378–Lys-384. The disordered stretch occupies residues Asp-378–Pro-487. Positions Glu-416 to Arg-431 are enriched in basic and acidic residues. Over residues Met-439 to Ser-465 the composition is skewed to polar residues. Lys-520 carries the N6-acetyllysine modification. Disordered regions lie at residues Gly-528 to Leu-583, Ala-598 to Asp-649, Thr-673 to Ser-692, and Pro-832 to Ser-891. Residues Ser-546 to Ser-562 are compositionally biased toward low complexity. Residues Arg-640–Asp-649 are compositionally biased toward basic and acidic residues. A compositionally biased stretch (pro residues) spans Leu-855 to Pro-870. Residue Lys-1008 forms a Glycyl lysine isopeptide (Lys-Gly) (interchain with G-Cter in SUMO2) linkage. The disordered stretch occupies residues Leu-1064 to Met-1093.

This sequence belongs to the GLI C2H2-type zinc-finger protein family. As to quaternary structure, interacts with KIF7. Interacts with STK36. Interacts with ZIC1; the interaction enhances transcription activation. Interacts with SUFU; this inhibits transcriptional activation by GLI1. In terms of processing, phosphorylated in vitro by ULK3. Acetylation at Lys-520 down-regulates transcriptional activity. Deacetylated by HDAC1. Post-translationally, ubiquitinated by the CRL2(FEM1B) complex, suppressing GLI1 transcriptional activator activity.

The protein resides in the cytoplasm. It localises to the nucleus. Functionally, acts as a transcriptional activator. Binds to the DNA consensus sequence 5'-GACCACCCA-3'. Regulates the transcription of specific genes during normal development. Plays a role in craniofacial development and digital development, as well as development of the central nervous system and gastrointestinal tract. Mediates SHH signaling. Plays a role in cell proliferation and differentiation via its role in SHH signaling. In Mus musculus (Mouse), this protein is Zinc finger protein GLI1 (Gli1).